Consider the following 85-residue polypeptide: Large ribosomal subunit protein bL27 (85 aa).

Residues 1-22 (MAHKKAGGSTRNGRDSESKRLG) are disordered.

It belongs to the bacterial ribosomal protein bL27 family.

This chain is Large ribosomal subunit protein bL27, found in Vibrio parahaemolyticus serotype O3:K6 (strain RIMD 2210633).